Reading from the N-terminus, the 336-residue chain is Ketol-acid reductoisomerase (NADP(+)) 1 (336 aa).

The KARI N-terminal Rossmann domain maps to 2-181; it reads AKVYYEKDVT…GATRAGVLET (180 aa). NADP(+) is bound by residues 25–28, R48, S52, and 82–85; these read YGSQ and DELQ. The active site involves H107. Position 133 (G133) interacts with NADP(+). The 146-residue stretch at 182-327 folds into the KARI C-terminal knotted domain; sequence TFKEETETDL…RKLREMMPFV (146 aa). Mg(2+) is bound by residues D190, E194, E226, and E230. S251 provides a ligand contact to substrate.

The protein belongs to the ketol-acid reductoisomerase family. The cofactor is Mg(2+).

The catalysed reaction is (2R)-2,3-dihydroxy-3-methylbutanoate + NADP(+) = (2S)-2-acetolactate + NADPH + H(+). It catalyses the reaction (2R,3R)-2,3-dihydroxy-3-methylpentanoate + NADP(+) = (S)-2-ethyl-2-hydroxy-3-oxobutanoate + NADPH + H(+). The protein operates within amino-acid biosynthesis; L-isoleucine biosynthesis; L-isoleucine from 2-oxobutanoate: step 2/4. It participates in amino-acid biosynthesis; L-valine biosynthesis; L-valine from pyruvate: step 2/4. Involved in the biosynthesis of branched-chain amino acids (BCAA). Catalyzes an alkyl-migration followed by a ketol-acid reduction of (S)-2-acetolactate (S2AL) to yield (R)-2,3-dihydroxy-isovalerate. In the isomerase reaction, S2AL is rearranged via a Mg-dependent methyl migration to produce 3-hydroxy-3-methyl-2-ketobutyrate (HMKB). In the reductase reaction, this 2-ketoacid undergoes a metal-dependent reduction by NADPH to yield (R)-2,3-dihydroxy-isovalerate. The sequence is that of Ketol-acid reductoisomerase (NADP(+)) 1 from Bacillus thuringiensis subsp. konkukian (strain 97-27).